The sequence spans 419 residues: Serine hydroxymethyltransferase (419 aa).

Residues L120 and 124–126 contribute to the (6S)-5,6,7,8-tetrahydrofolate site; that span reads GHL. Position 229 is an N6-(pyridoxal phosphate)lysine (K229).

The protein belongs to the SHMT family. As to quaternary structure, homodimer. Pyridoxal 5'-phosphate is required as a cofactor.

The protein localises to the cytoplasm. It catalyses the reaction (6R)-5,10-methylene-5,6,7,8-tetrahydrofolate + glycine + H2O = (6S)-5,6,7,8-tetrahydrofolate + L-serine. It functions in the pathway one-carbon metabolism; tetrahydrofolate interconversion. It participates in amino-acid biosynthesis; glycine biosynthesis; glycine from L-serine: step 1/1. Catalyzes the reversible interconversion of serine and glycine with tetrahydrofolate (THF) serving as the one-carbon carrier. This reaction serves as the major source of one-carbon groups required for the biosynthesis of purines, thymidylate, methionine, and other important biomolecules. Also exhibits THF-independent aldolase activity toward beta-hydroxyamino acids, producing glycine and aldehydes, via a retro-aldol mechanism. The sequence is that of Serine hydroxymethyltransferase from Herpetosiphon aurantiacus (strain ATCC 23779 / DSM 785 / 114-95).